Consider the following 168-residue polypeptide: Photosystem I assembly protein Ycf3 (168 aa).

TPR repeat units lie at residues 35-68 (AFTY…EIDP), 72-105 (SYIL…NPFL), and 120-153 (GEQA…TPGN).

It belongs to the Ycf3 family.

It localises to the plastid. It is found in the chloroplast thylakoid membrane. Its function is as follows. Essential for the assembly of the photosystem I (PSI) complex. May act as a chaperone-like factor to guide the assembly of the PSI subunits. The protein is Photosystem I assembly protein Ycf3 of Solanum lycopersicum (Tomato).